We begin with the raw amino-acid sequence, 51 residues long: Insulin (51 aa).

3 disulfide bridges follow: cysteine 7/cysteine 37, cysteine 19/cysteine 50, and cysteine 36/cysteine 41.

Belongs to the insulin family. Heterodimer of a B chain and an A chain linked by two disulfide bonds.

It localises to the secreted. Functionally, insulin decreases blood glucose concentration. It increases cell permeability to monosaccharides, amino acids and fatty acids. It accelerates glycolysis, the pentose phosphate cycle, and glycogen synthesis in liver. The chain is Insulin (INS) from Balaenoptera borealis (Sei whale).